A 571-amino-acid polypeptide reads, in one-letter code: Putative F-box protein At5g39460 (571 aa).

The F-box domain occupies 9–55 (ACLLLTLPEDVFAVISRFLSPSDICNLILCGKSLCALVDSEKTWLVQ).

This is Putative F-box protein At5g39460 from Arabidopsis thaliana (Mouse-ear cress).